The chain runs to 366 residues: GTPase Obg (366 aa).

Residues Met1–Ile159 form the Obg domain. The region spanning Ala160–Val327 is the OBG-type G domain. Residues Gly166–Ser173, Phe191–His195, Asp212–Gly215, Ser279–Asp282, and Ser308–Ile310 contribute to the GTP site. 2 residues coordinate Mg(2+): Ser173 and Thr193. The segment at Asp333–Glu366 is disordered. A compositionally biased stretch (basic and acidic residues) spans Lys347 to Gly357.

It belongs to the TRAFAC class OBG-HflX-like GTPase superfamily. OBG GTPase family. Monomer. It depends on Mg(2+) as a cofactor.

The protein resides in the cytoplasm. In terms of biological role, an essential GTPase which binds GTP, GDP and possibly (p)ppGpp with moderate affinity, with high nucleotide exchange rates and a fairly low GTP hydrolysis rate. Plays a role in control of the cell cycle, stress response, ribosome biogenesis and in those bacteria that undergo differentiation, in morphogenesis control. This chain is GTPase Obg, found in Allorhizobium ampelinum (strain ATCC BAA-846 / DSM 112012 / S4) (Agrobacterium vitis (strain S4)).